We begin with the raw amino-acid sequence, 434 residues long: UDP-glucose 6-dehydrogenase (434 aa).

Residues 2-19, valine 11, aspartate 30, lysine 35, threonine 121, and glutamate 152 contribute to the NAD(+) site; that span reads NITF…GIIM. Substrate-binding positions include 148 to 152, lysine 204, asparagine 208, 249 to 253, and glycine 257; these read EFLRE and FLNAG. Cysteine 260 serves as the catalytic Nucleophile. Lysine 263 provides a ligand contact to NAD(+). Lysine 321 contributes to the substrate binding site. Arginine 328 is an NAD(+) binding site.

Belongs to the UDP-glucose/GDP-mannose dehydrogenase family.

The enzyme catalyses UDP-alpha-D-glucose + 2 NAD(+) + H2O = UDP-alpha-D-glucuronate + 2 NADH + 3 H(+). Its pathway is nucleotide-sugar biosynthesis; UDP-alpha-D-glucuronate biosynthesis; UDP-alpha-D-glucuronate from UDP-alpha-D-glucose: step 1/1. In Rickettsia prowazekii (strain Madrid E), this protein is UDP-glucose 6-dehydrogenase (udg).